Consider the following 151-residue polypeptide: UPF0251 protein Ctha_0452 (151 aa).

Belongs to the UPF0251 family.

This Chloroherpeton thalassium (strain ATCC 35110 / GB-78) protein is UPF0251 protein Ctha_0452.